Consider the following 400-residue polypeptide: Probable tRNA pseudouridine synthase D (400 aa).

Asp-89 (nucleophile) is an active-site residue. Residues 162–357 (GVPNYYGLQR…AGGDRKPALL (196 aa)) form the TRUD domain.

This sequence belongs to the pseudouridine synthase TruD family.

The enzyme catalyses uridine(13) in tRNA = pseudouridine(13) in tRNA. In terms of biological role, could be responsible for synthesis of pseudouridine from uracil-13 in transfer RNAs. This chain is Probable tRNA pseudouridine synthase D, found in Methanopyrus kandleri (strain AV19 / DSM 6324 / JCM 9639 / NBRC 100938).